We begin with the raw amino-acid sequence, 385 residues long: tRNA pseudouridine synthase D (385 aa).

Aspartate 86 (nucleophile) is an active-site residue. One can recognise a TRUD domain in the interval 165–305 (GFPNYFGNQR…TRFLQKDIAP (141 aa)).

Belongs to the pseudouridine synthase TruD family.

The enzyme catalyses uridine(13) in tRNA = pseudouridine(13) in tRNA. Its function is as follows. Responsible for synthesis of pseudouridine from uracil-13 in transfer RNAs. In Helicobacter hepaticus (strain ATCC 51449 / 3B1), this protein is tRNA pseudouridine synthase D.